The primary structure comprises 102 residues: Large ribosomal subunit protein bL21 (102 aa).

Belongs to the bacterial ribosomal protein bL21 family. In terms of assembly, part of the 50S ribosomal subunit. Contacts protein L20.

In terms of biological role, this protein binds to 23S rRNA in the presence of protein L20. This is Large ribosomal subunit protein bL21 from Clavibacter sepedonicus (Clavibacter michiganensis subsp. sepedonicus).